Consider the following 189-residue polypeptide: Probable nicotinate-nucleotide adenylyltransferase (189 aa).

This sequence belongs to the NadD family.

It catalyses the reaction nicotinate beta-D-ribonucleotide + ATP + H(+) = deamido-NAD(+) + diphosphate. It participates in cofactor biosynthesis; NAD(+) biosynthesis; deamido-NAD(+) from nicotinate D-ribonucleotide: step 1/1. In terms of biological role, catalyzes the reversible adenylation of nicotinate mononucleotide (NaMN) to nicotinic acid adenine dinucleotide (NaAD). This is Probable nicotinate-nucleotide adenylyltransferase from Bacillus cereus (strain AH820).